The primary structure comprises 470 residues: Ribulose bisphosphate carboxylase large chain (470 aa).

Lys5 bears the N6,N6,N6-trimethyllysine mark. Residues Asn114 and Thr164 each coordinate substrate. Residue Lys166 is the Proton acceptor of the active site. Lys168 contacts substrate. Residues Lys192, Asp194, and Glu195 each coordinate Mg(2+). Lys192 carries the post-translational modification N6-carboxylysine. His285 functions as the Proton acceptor in the catalytic mechanism. Arg286, His318, and Ser370 together coordinate substrate.

It belongs to the RuBisCO large chain family. Type I subfamily. Heterohexadecamer of 8 large chains and 8 small chains; disulfide-linked. The disulfide link is formed within the large subunit homodimers. Mg(2+) serves as cofactor. In terms of processing, the disulfide bond which can form in the large chain dimeric partners within the hexadecamer appears to be associated with oxidative stress and protein turnover.

The protein localises to the plastid. It localises to the chloroplast. The catalysed reaction is 2 (2R)-3-phosphoglycerate + 2 H(+) = D-ribulose 1,5-bisphosphate + CO2 + H2O. It catalyses the reaction D-ribulose 1,5-bisphosphate + O2 = 2-phosphoglycolate + (2R)-3-phosphoglycerate + 2 H(+). Its function is as follows. RuBisCO catalyzes two reactions: the carboxylation of D-ribulose 1,5-bisphosphate, the primary event in carbon dioxide fixation, as well as the oxidative fragmentation of the pentose substrate in the photorespiration process. Both reactions occur simultaneously and in competition at the same active site. The sequence is that of Ribulose bisphosphate carboxylase large chain from Bertiera breviflora.